The chain runs to 380 residues: Tryptophan 2,3-dioxygenase (380 aa).

Substrate is bound by residues Phe-57–His-61 and Arg-128. His-313 is a heme binding site. Residue Thr-328 coordinates substrate.

Belongs to the tryptophan 2,3-dioxygenase family. In terms of assembly, homotetramer. Dimer of dimers. Heme is required as a cofactor.

The catalysed reaction is L-tryptophan + O2 = N-formyl-L-kynurenine. Its pathway is amino-acid degradation; L-tryptophan degradation via kynurenine pathway; L-kynurenine from L-tryptophan: step 1/2. The protein operates within pigment biosynthesis; ommochrome biosynthesis. Its function is as follows. Heme-dependent dioxygenase that catalyzes the oxidative cleavage of the L-tryptophan (L-Trp) pyrrole ring and converts L-tryptophan to N-formyl-L-kynurenine. Catalyzes the oxidative cleavage of the indole moiety. This chain is Tryptophan 2,3-dioxygenase, found in Drosophila ananassae (Fruit fly).